The primary structure comprises 495 residues: Acyltransferase abl6 (495 aa).

Catalysis depends on H171, which acts as the Proton acceptor.

The protein belongs to the plant acyltransferase family.

Acyltransferase; part of the gene cluster that mediates the biosynthesis of abscisic acid (ABA), a phytohormone that acts antagonistically toward salicylic acid (SA), jasmonic acid (JA) and ethylene (ETH) signaling, to impede plant defense responses. The first step of the pathway catalyzes the reaction from farnesyl diphosphate to alpha-ionylideneethane performed by the alpha-ionylideneethane synthase abl3 via a three-step reaction mechanism involving 2 neutral intermediates, beta-farnesene and allofarnesene. The cytochrome P450 monooxygenase abl1 might then be involved in the conversion of alpha-ionylideneethane to alpha-ionylideneacetic acid. Alpha-ionylideneacetic acid is further converted to abscisic acid in 2 steps involving the cytochrome P450 monooxygenase abl2 and the short-chain dehydrogenase/reductase abl4, via the intermediates 1'-deoxy-ABA or 1',4'-trans-diol-ABA, depending on the order of action of these 2 enzymes. Abl2 is responsible for the hydroxylation of carbon atom C-1' and abl4 might be involved in the oxidation of the C-4' carbon atom. The acyltransferase abl6 seems not essential for the biosynthesis of ABA, but it may acetylate ABA as part of the synthesis of another ABA-related molecule. The protein is Acyltransferase abl6 of Leptosphaeria maculans (strain JN3 / isolate v23.1.3 / race Av1-4-5-6-7-8) (Blackleg fungus).